The sequence spans 101 residues: MSDEGYRELVESKSAPTTPGPWSPDRERWKRHEAAWKQHCSWSHGLWCHCHDWTRHLKKETRECGSGTESGEDPAVSFDLVDDAAMLAAAGDAEPGAAGGG.

Basic and acidic residues predominate over residues 1-11; the sequence is MSDEGYRELVE. The segment at 1–26 is disordered; it reads MSDEGYRELVESKSAPTTPGPWSPDR.

This is an uncharacterized protein from Torque teno canis virus (isolate Cf-TTV10).